The sequence spans 441 residues: Cobyrinate a,c-diamide synthase (441 aa).

Residues 243–434 (TVAVADDAAF…AHVHPESTAF (192 aa)) form the GATase cobBQ-type domain. C323 serves as the catalytic Nucleophile.

Belongs to the CobB/CbiA family. Mg(2+) is required as a cofactor.

The catalysed reaction is cob(II)yrinate + 2 L-glutamine + 2 ATP + 2 H2O = cob(II)yrinate a,c diamide + 2 L-glutamate + 2 ADP + 2 phosphate + 2 H(+). The protein operates within cofactor biosynthesis; adenosylcobalamin biosynthesis; cob(II)yrinate a,c-diamide from sirohydrochlorin (anaerobic route): step 10/10. Catalyzes the ATP-dependent amidation of the two carboxylate groups at positions a and c of cobyrinate, using either L-glutamine or ammonia as the nitrogen source. This Halobacterium salinarum (strain ATCC 700922 / JCM 11081 / NRC-1) (Halobacterium halobium) protein is Cobyrinate a,c-diamide synthase.